The chain runs to 260 residues: Tropinone reductase homolog At1g07450 (260 aa).

14-38 is a binding site for NADP(+); that stretch reads LVTGGSKGIGYAIVEELVGFGARVH. Substrate is bound at residue Ser-147. Tyr-159 serves as the catalytic Proton acceptor.

This sequence belongs to the short-chain dehydrogenases/reductases (SDR) family. SDR65C subfamily.

This is Tropinone reductase homolog At1g07450 from Arabidopsis thaliana (Mouse-ear cress).